Reading from the N-terminus, the 505-residue chain is Exoglucanase 1 (505 aa).

The signal sequence occupies residues 1–17 (MYRKLAVISAFLAAARA). Residue Gln-18 is modified to Pyrrolidone carboxylic acid. A catalytic region spans residues 18-449 (QQVCTQQAET…GSTGGNTGSN (432 aa)). Disulfide bonds link Cys-21–Cys-88, Cys-36–Cys-41, Cys-66–Cys-87, and Cys-77–Cys-83. Asn-93 and Asn-126 each carry an N-linked (GlcNAc...) asparagine glycan. Intrachain disulfides connect Cys-151–Cys-410, Cys-185–Cys-223, Cys-189–Cys-222, Cys-243–Cys-269, Cys-251–Cys-256, and Cys-274–Cys-344. The Nucleophile role is filled by Glu-225. Catalysis depends on Glu-230, which acts as the Proton donor/acceptor. 2 N-linked (GlcNAc...) asparagine glycosylation sites follow: Asn-283 and Asn-397. Disordered stretches follow at residues 399-423 (TAST…VEAQ) and 440-472 (GSTG…ATQT). Over residues 409–423 (SCSTSSGVPAQVEAQ) the composition is skewed to polar residues. Low complexity predominate over residues 447-470 (GSNPPGTSTTRAPPSSTGSSPTAT). The interval 450–468 (PPGTSTTRAPPSSTGSSPT) is linker. Residues 469-505 (ATQTHYGQCGGTGWTGPTRCASGYTCQVLNPFYSQCL) form the CBM1 domain.

It belongs to the glycosyl hydrolase 7 (cellulase C) family. Post-translationally, O-glycosylated. O-glycosylation of the cellulase linker provides protection from proteolysis. Linker glycans also contribute to binding affinity of cellobiohydrolases to cellulose.

The protein resides in the secreted. The enzyme catalyses Hydrolysis of (1-&gt;4)-beta-D-glucosidic linkages in cellulose and cellotetraose, releasing cellobiose from the non-reducing ends of the chains.. Its function is as follows. Exocellobiohydrolases (CBH) that catalyzes the hydrolysis of 1,4-beta-D-glucosidic bonds in cellulose to release the disaccharide cellobiose. The degradation of cellulose involves an interplay between different cellulolytic enzymes. Hydrolysis starts with endoglucanases (EGs), which cut internal beta-1,4-glucosidic bonds in cellulose to reduce the polymerization degree of the substrate and create new chain ends for exocellobiohydrolases (CBHs). The CBHs release the disaccharide cellobiose from the non-reducing end of the cellulose polymer chain. Finally, beta-1,4-glucosidases hydrolyze the cellobiose and other short cello-oligosaccharides into glucose units. The sequence is that of Exoglucanase 1 (cbh1) from Trichoderma harzianum (Hypocrea lixii).